A 633-amino-acid polypeptide reads, in one-letter code: Chaperone protein dnaK2 (633 aa).

T197 is modified (phosphothreonine; by autocatalysis). Residues A513–Q532 are compositionally biased toward basic and acidic residues. Disordered regions lie at residues A513–D534 and Q598–K633. Residues P606–D619 are compositionally biased toward low complexity. Residues G620 to K633 show a composition bias toward acidic residues.

The protein belongs to the heat shock protein 70 family.

In terms of biological role, acts as a chaperone. The polypeptide is Chaperone protein dnaK2 (dnaK2) (Nostoc sp. (strain PCC 7120 / SAG 25.82 / UTEX 2576)).